Here is a 147-residue protein sequence, read N- to C-terminus: uncharacterized protein (147 aa).

This is an uncharacterized protein from Acidianus filamentous virus 2 (isolate Italy/Pozzuoli) (AFV-2).